The primary structure comprises 461 residues: Argininosuccinate lyase (461 aa).

This sequence belongs to the lyase 1 family. Argininosuccinate lyase subfamily. Homotetramer.

The protein resides in the cytoplasm. The enzyme catalyses 2-(N(omega)-L-arginino)succinate = fumarate + L-arginine. It participates in amino-acid biosynthesis; L-arginine biosynthesis; L-arginine from L-ornithine and carbamoyl phosphate: step 3/3. The protein is Argininosuccinate lyase of Nostoc punctiforme (strain ATCC 29133 / PCC 73102).